Consider the following 385-residue polypeptide: Alkanesulfonate monooxygenase (385 aa).

Belongs to the SsuD family.

The enzyme catalyses an alkanesulfonate + FMNH2 + O2 = an aldehyde + FMN + sulfite + H2O + 2 H(+). In terms of biological role, catalyzes the desulfonation of aliphatic sulfonates. This Burkholderia pseudomallei (strain 1710b) protein is Alkanesulfonate monooxygenase.